The chain runs to 124 residues: Small ribosomal subunit protein uS12 (124 aa).

Aspartate 89 is subject to 3-methylthioaspartic acid.

Belongs to the universal ribosomal protein uS12 family. As to quaternary structure, part of the 30S ribosomal subunit. Contacts proteins S8 and S17. May interact with IF1 in the 30S initiation complex.

With S4 and S5 plays an important role in translational accuracy. Functionally, interacts with and stabilizes bases of the 16S rRNA that are involved in tRNA selection in the A site and with the mRNA backbone. Located at the interface of the 30S and 50S subunits, it traverses the body of the 30S subunit contacting proteins on the other side and probably holding the rRNA structure together. The combined cluster of proteins S8, S12 and S17 appears to hold together the shoulder and platform of the 30S subunit. The protein is Small ribosomal subunit protein uS12 of Koribacter versatilis (strain Ellin345).